Reading from the N-terminus, the 85-residue chain is Large ribosomal subunit protein bL31B (85 aa).

The protein belongs to the bacterial ribosomal protein bL31 family. Type B subfamily. Part of the 50S ribosomal subunit.

This is Large ribosomal subunit protein bL31B from Clavibacter michiganensis subsp. michiganensis (strain NCPPB 382).